The chain runs to 483 residues: MHHMTLAEIARGLADKKFSSVELTQTLLARIAQLDPQINSFISLTQDLALSQAKAADERRANGESGALLGAPIAHKDLFCTQGIRTSCGSKMLDNFKAPYDATVVAKLAAAGAVTLGKTNMDEFAMGSANESSWYGAVKNPWNLEHVPGGSSGGSAAAVAARLLPAATATDTGGSIRQPAAFTNLTGLKPTYGRVSRWGMIAYASSLDQGGPLARTAEDCAILLQGMAGFDPNDSTSIDEPVPDYSAGLTGSLQGLRIGVPKEYFSAGLDPRIAELIHNSIKELEKLGAVIKEISLPNMQHAIPAYYVIAPAEASSNLSRFDGVRFGYRCENPENLEDLYKRSRGEGFGSEVQRRIMVGAYALSAGYYDAYYLKAQKIRRLVKNDFMTAFNEVDIILGPTTPNPAWKLGAKSSDPVAAYLEDVYTITANLAGLPGLSMPAGFVDGLPVGVQLLAPYFQEGRLLNVAHQYQLNTDWHTRTPTGF.

Active-site charge relay system residues include Lys76 and Ser151. The Acyl-ester intermediate role is filled by Ser175.

The protein belongs to the amidase family. GatA subfamily. In terms of assembly, heterotrimer of A, B and C subunits.

It carries out the reaction L-glutamyl-tRNA(Gln) + L-glutamine + ATP + H2O = L-glutaminyl-tRNA(Gln) + L-glutamate + ADP + phosphate + H(+). Functionally, allows the formation of correctly charged Gln-tRNA(Gln) through the transamidation of misacylated Glu-tRNA(Gln) in organisms which lack glutaminyl-tRNA synthetase. The reaction takes place in the presence of glutamine and ATP through an activated gamma-phospho-Glu-tRNA(Gln). The protein is Glutamyl-tRNA(Gln) amidotransferase subunit A of Pseudomonas fluorescens (strain ATCC BAA-477 / NRRL B-23932 / Pf-5).